We begin with the raw amino-acid sequence, 307 residues long: Ornithine carbamoyltransferase (307 aa).

Carbamoyl phosphate is bound by residues 50-53, glutamine 77, arginine 101, and 128-131; these read STRT and HPCQ. Residues asparagine 160, aspartate 224, and 228 to 229 contribute to the L-ornithine site; that span reads SM. Residues 264–265 and arginine 292 each bind carbamoyl phosphate; that span reads CL.

This sequence belongs to the aspartate/ornithine carbamoyltransferase superfamily. OTCase family.

The protein localises to the cytoplasm. The catalysed reaction is carbamoyl phosphate + L-ornithine = L-citrulline + phosphate + H(+). It functions in the pathway amino-acid biosynthesis; L-arginine biosynthesis; L-arginine from L-ornithine and carbamoyl phosphate: step 1/3. Reversibly catalyzes the transfer of the carbamoyl group from carbamoyl phosphate (CP) to the N(epsilon) atom of ornithine (ORN) to produce L-citrulline. In Clavibacter michiganensis subsp. michiganensis (strain NCPPB 382), this protein is Ornithine carbamoyltransferase.